The sequence spans 187 residues: Resolvase OPG149 (187 aa).

The protein belongs to the RuvC family. Poxviruses-type subfamily. Mg(2+) is required as a cofactor.

In terms of biological role, plays a role in DNA replication by cleaving viral DNA concatamers to yield unit-length viral genomes. The concatamer junctions contain inverted repeat sequences that can be extruded as cruciforms, yielding Holliday junctions that A22 protein cleaves. This chain is Resolvase OPG149 (OPG149), found in Vaccinia virus (strain Western Reserve) (VACV).